We begin with the raw amino-acid sequence, 169 residues long: uncharacterized protein (169 aa).

In terms of domain architecture, N-acetyltransferase spans 4-160 (IEVKRLLVNY…EGVKEQLSED (157 aa)).

This is an uncharacterized protein from Halalkalibacterium halodurans (strain ATCC BAA-125 / DSM 18197 / FERM 7344 / JCM 9153 / C-125) (Bacillus halodurans).